The primary structure comprises 91 residues: Sec-independent protein translocase protein TatA (91 aa).

A helical transmembrane segment spans residues 1–21 (MGIFDWKHWIVILIVVVLVFG). The tract at residues 41–91 (KAMNDDDKPAEQPAPQPQQAQPAPQGSPLNQPHTIDAQAHKVDEPIRKDQV) is disordered. Residues 51–64 (EQPAPQPQQAQPAP) show a composition bias toward low complexity. Over residues 78–91 (QAHKVDEPIRKDQV) the composition is skewed to basic and acidic residues.

It belongs to the TatA/E family. As to quaternary structure, the Tat system comprises two distinct complexes: a TatABC complex, containing multiple copies of TatA, TatB and TatC subunits, and a separate TatA complex, containing only TatA subunits. Substrates initially bind to the TatABC complex, which probably triggers association of the separate TatA complex to form the active translocon.

The protein resides in the cell inner membrane. Its function is as follows. Part of the twin-arginine translocation (Tat) system that transports large folded proteins containing a characteristic twin-arginine motif in their signal peptide across membranes. TatA could form the protein-conducting channel of the Tat system. The polypeptide is Sec-independent protein translocase protein TatA (Pseudomonas syringae pv. syringae (strain B728a)).